Reading from the N-terminus, the 221-residue chain is Cytidylate kinase 1 (221 aa).

7–15 (GPSASGKSS) serves as a coordination point for ATP.

The protein belongs to the cytidylate kinase family. Type 1 subfamily.

It is found in the cytoplasm. It catalyses the reaction CMP + ATP = CDP + ADP. The catalysed reaction is dCMP + ATP = dCDP + ADP. This is Cytidylate kinase 1 from Borreliella afzelii (strain PKo) (Borrelia afzelii).